The chain runs to 97 residues: Biogenesis of lysosome-related organelles complex 1 subunit SNN1 (97 aa).

A coiled-coil region spans residues Val-45–Val-97.

This sequence belongs to the SNAPIN family. In terms of assembly, component of the biogenesis of lysosome-related organelles complex-1 (BLOC-1).

Its subcellular location is the endosome. In terms of biological role, component of the biogenesis of lysosome-related organelles complex-1 (BLOC-1), a complex involved in endosomal cargo sorting. In Lachancea thermotolerans (strain ATCC 56472 / CBS 6340 / NRRL Y-8284) (Yeast), this protein is Biogenesis of lysosome-related organelles complex 1 subunit SNN1 (SNN1).